The chain runs to 155 residues: Cytochrome P450 (155 aa).

C99 contributes to the heme binding site.

This sequence belongs to the cytochrome P450 family. Requires heme as cofactor.

The polypeptide is Cytochrome P450 (Helianthus annuus (Common sunflower)).